Here is a 64-residue protein sequence, read N- to C-terminus: Conotoxin VnMLCL-033 (64 aa).

The signal sequence occupies residues 1–19 (MLCLPVFIILLLLASPAAP). Positions 20–43 (NPLQTRIQSNLIRAGPEDANIKTD) are excised as a propeptide. The residue at position 63 (Ile-63) is an Isoleucine amide.

The protein belongs to the conotoxin T superfamily. Expressed by the venom duct.

The protein localises to the secreted. This is Conotoxin VnMLCL-033 from Conus ventricosus (Mediterranean cone).